The chain runs to 217 residues: 3,4-dihydroxy-2-butanone 4-phosphate synthase (217 aa).

Residues 37–38, aspartate 42, 150–154, and glutamate 174 contribute to the D-ribulose 5-phosphate site; these read RE and RRGHT. Glutamate 38 contacts Mg(2+). Residue histidine 153 participates in Mg(2+) binding.

This sequence belongs to the DHBP synthase family. Homodimer. Mg(2+) is required as a cofactor. Mn(2+) serves as cofactor.

The catalysed reaction is D-ribulose 5-phosphate = (2S)-2-hydroxy-3-oxobutyl phosphate + formate + H(+). The protein operates within cofactor biosynthesis; riboflavin biosynthesis; 2-hydroxy-3-oxobutyl phosphate from D-ribulose 5-phosphate: step 1/1. Its function is as follows. Catalyzes the conversion of D-ribulose 5-phosphate to formate and 3,4-dihydroxy-2-butanone 4-phosphate. The polypeptide is 3,4-dihydroxy-2-butanone 4-phosphate synthase (Shewanella baltica (strain OS155 / ATCC BAA-1091)).